Here is a 92-residue protein sequence, read N- to C-terminus: RNA-binding protein Hfq (92 aa).

The 60-residue stretch at 9 to 68 (DPFLNALRRERVPVSIYLVNGIKLQGQVESFDQFVILLKNTVSQMVYKHAISTVVPSRPF) folds into the Sm domain.

The protein belongs to the Hfq family. As to quaternary structure, homohexamer.

Functionally, RNA chaperone that binds small regulatory RNA (sRNAs) and mRNAs to facilitate mRNA translational regulation in response to envelope stress, environmental stress and changes in metabolite concentrations. Also binds with high specificity to tRNAs. The sequence is that of RNA-binding protein Hfq from Shewanella piezotolerans (strain WP3 / JCM 13877).